Reading from the N-terminus, the 91-residue chain is Potassium channel toxin TdiKIK (91 aa).

Residues 1-25 (MVATNRCCVFALLVALLLIHSLAEA) form the signal peptide. Residues 26–44 (GKGKEVLGKIKNKLVEVKE) constitute a propeptide that is removed on maturation. Residues 58–91 (EYACPVIDKFCEDHCAAKNAIGKCDDFKCQCLNS) form the BetaSPN-type CS-alpha/beta domain. Cystine bridges form between Cys61-Cys81, Cys68-Cys86, and Cys72-Cys88.

In terms of tissue distribution, expressed by the venom gland.

It localises to the secreted. In terms of biological role, the full peptide presents antibacterial and cytotoxic activities. The synthetic C-terminus (AA 33-76) inhibits voltage-gated potassium channels Kv1.1/KCNA1, Kv1.2/KCNA2, and Kv1.3/KCNA3. This Tityus discrepans (Venezuelan scorpion) protein is Potassium channel toxin TdiKIK.